We begin with the raw amino-acid sequence, 226 residues long: 7-cyano-7-deazaguanine synthase (226 aa).

Position 7–17 (7–17) interacts with ATP; the sequence is ISGGMDSLVVA. Zn(2+) is bound by residues cysteine 187, cysteine 195, cysteine 198, and cysteine 201.

Belongs to the QueC family. Zn(2+) serves as cofactor.

The catalysed reaction is 7-carboxy-7-deazaguanine + NH4(+) + ATP = 7-cyano-7-deazaguanine + ADP + phosphate + H2O + H(+). It participates in purine metabolism; 7-cyano-7-deazaguanine biosynthesis. Functionally, catalyzes the ATP-dependent conversion of 7-carboxy-7-deazaguanine (CDG) to 7-cyano-7-deazaguanine (preQ(0)). This Chlorobium phaeobacteroides (strain BS1) protein is 7-cyano-7-deazaguanine synthase.